Consider the following 340-residue polypeptide: uncharacterized protein (340 aa).

A signal peptide spans 1 to 20 (MGGARRLKLDGSIPNQLARA).

This is an uncharacterized protein from Mycobacterium tuberculosis (strain CDC 1551 / Oshkosh).